The chain runs to 588 residues: Catechol oxidase B, chloroplastic (588 aa).

A chloroplast-targeting transit peptide spans 1 to 88; that stretch reads SSSSTTTIPL…AANLAPLASA (88 aa). 2 cysteine pairs are disulfide-bonded: C99–C115 and C114–C181. Residues H180, H198, H207, H329, H333, and H364 each coordinate Cu cation. The 2'-(S-cysteinyl)-histidine (Cys-His) cross-link spans 184-198; sequence CNGAYKVGGKELQVH.

Belongs to the tyrosinase family. It depends on Cu(2+) as a cofactor.

The protein resides in the plastid. The protein localises to the chloroplast thylakoid lumen. It carries out the reaction 2 catechol + O2 = 2 1,2-benzoquinone + 2 H2O. Catalyzes the oxidation of mono- and o-diphenols to o-diquinones. The chain is Catechol oxidase B, chloroplastic from Solanum tuberosum (Potato).